A 397-amino-acid polypeptide reads, in one-letter code: Aromatic-amino-acid aminotransferase (397 aa).

Substrate-binding residues include glycine 34, tyrosine 66, tryptophan 131, and asparagine 184. Lysine 247 carries the post-translational modification N6-(pyridoxal phosphate)lysine. Positions 281 and 375 each coordinate substrate.

It belongs to the class-I pyridoxal-phosphate-dependent aminotransferase family. As to quaternary structure, homodimer. It depends on pyridoxal 5'-phosphate as a cofactor.

The protein localises to the cytoplasm. The catalysed reaction is an aromatic L-alpha-amino acid + 2-oxoglutarate = an aromatic oxo-acid + L-glutamate. It catalyses the reaction (3S)-3-methyl-L-phenylalanine + 2-oxoglutarate = (3S)-2-oxo-3-phenylbutanoate + L-glutamate. Its pathway is amino-acid biosynthesis; L-phenylalanine biosynthesis; L-phenylalanine from phenylpyruvate (ArAT route): step 1/1. The protein operates within amino-acid biosynthesis; L-tyrosine biosynthesis; L-tyrosine from (4-hydroxyphenyl)pyruvate: step 1/1. Broad-specificity enzyme that catalyzes the transamination of 2-ketoisocaproate, p-hydroxyphenylpyruvate, and phenylpyruvate to yield leucine, tyrosine, and phenylalanine, respectively. In vitro, is able to catalyze the conversion of beta-methyl phenylpyruvate to the nonproteinogenic amino acid (2S,3S)-beta-methyl-phenylalanine, a building block of the antibiotic mannopeptimycin produced by Streptomyces hygroscopicus NRRL3085. This chain is Aromatic-amino-acid aminotransferase (tyrB), found in Escherichia coli (strain K12).